Reading from the N-terminus, the 408-residue chain is LL-diaminopimelate aminotransferase (408 aa).

Substrate is bound by residues Tyr-15 and Gly-42. Residues Tyr-72, 108-109, Tyr-132, Asn-187, Tyr-218, and 246-248 each bind pyridoxal 5'-phosphate; these read SK and SFS. 3 residues coordinate substrate: Lys-109, Tyr-132, and Asn-187. Lys-249 is modified (N6-(pyridoxal phosphate)lysine). Residues Arg-257 and Asn-292 each coordinate pyridoxal 5'-phosphate. Residues Asn-292 and Arg-388 each contribute to the substrate site.

This sequence belongs to the class-I pyridoxal-phosphate-dependent aminotransferase family. LL-diaminopimelate aminotransferase subfamily. Homodimer. Pyridoxal 5'-phosphate is required as a cofactor.

It catalyses the reaction (2S,6S)-2,6-diaminopimelate + 2-oxoglutarate = (S)-2,3,4,5-tetrahydrodipicolinate + L-glutamate + H2O + H(+). Its pathway is amino-acid biosynthesis; L-lysine biosynthesis via DAP pathway; LL-2,6-diaminopimelate from (S)-tetrahydrodipicolinate (aminotransferase route): step 1/1. Involved in the synthesis of meso-diaminopimelate (m-DAP or DL-DAP), required for both lysine and peptidoglycan biosynthesis. Catalyzes the direct conversion of tetrahydrodipicolinate to LL-diaminopimelate. The protein is LL-diaminopimelate aminotransferase of Prochlorococcus marinus (strain MIT 9515).